The sequence spans 164 residues: UPF0114 protein YqhA (164 aa).

The next 3 membrane-spanning stretches (helical) occupy residues 15–35, 53–73, and 136–156; these read LLAP…LKFF, LILV…LVMV, and LMWY…MGYL.

The protein belongs to the UPF0114 family.

The protein localises to the cell membrane. This Shigella dysenteriae serotype 1 (strain Sd197) protein is UPF0114 protein YqhA.